We begin with the raw amino-acid sequence, 748 residues long: Acyl-coenzyme A oxidase (748 aa).

Belongs to the acyl-CoA oxidase family. FAD serves as cofactor.

It is found in the peroxisome. The catalysed reaction is a 2,3-saturated acyl-CoA + O2 = a (2E)-enoyl-CoA + H2O2. Its pathway is lipid metabolism; peroxisomal fatty acid beta-oxidation. This chain is Acyl-coenzyme A oxidase (POX1), found in Candida glabrata (strain ATCC 2001 / BCRC 20586 / JCM 3761 / NBRC 0622 / NRRL Y-65 / CBS 138) (Yeast).